Consider the following 662-residue polypeptide: Histidine decarboxylase (662 aa).

Positions 81 and 194 each coordinate substrate. Lysine 305 is modified (N6-(pyridoxal phosphate)lysine).

Belongs to the group II decarboxylase family. As to quaternary structure, homodimer. Requires pyridoxal 5'-phosphate as cofactor.

It carries out the reaction L-histidine + H(+) = histamine + CO2. It functions in the pathway amine and polyamine biosynthesis; histamine biosynthesis; histamine from L-histidine: step 1/1. Functionally, catalyzes the biosynthesis of histamine from histidine. This is Histidine decarboxylase (HDC) from Homo sapiens (Human).